A 200-amino-acid chain; its full sequence is Probable GTP-binding protein EngB (200 aa).

Residues 25–199 (SGYEVAFAGR…ISLLDRWYEW (175 aa)) enclose the EngB-type G domain. Residues 33 to 40 (GRSNAGKS), 60 to 64 (GRTQL), 78 to 81 (DLPG), 145 to 148 (TKAD), and 178 to 180 (FSS) each bind GTP. Ser-40 and Thr-62 together coordinate Mg(2+).

It belongs to the TRAFAC class TrmE-Era-EngA-EngB-Septin-like GTPase superfamily. EngB GTPase family. Mg(2+) is required as a cofactor.

Functionally, necessary for normal cell division and for the maintenance of normal septation. The polypeptide is Probable GTP-binding protein EngB (Legionella pneumophila (strain Corby)).